We begin with the raw amino-acid sequence, 439 residues long: Rhodopsin (439 aa).

An N-linked (GlcNAc...) asparagine glycan is attached at N1. Topologically, residues 1-26 (NETWWYNPYMDIHSHWKQFDQVPAAV) are extracellular. The chain crosses the membrane as a helical span at residues 27–51 (YYSLGIFIAICGIIGCAGNGIVIYL). At 52–63 (FTKTKSLQTPAN) the chain is on the cytoplasmic side. The helical transmembrane segment at 64–90 (MFIINLAFSDFTFSLVNGFPMMTISCF) threads the bilayer. Residues 91-102 (LKHWVFGQAACK) lie on the Extracellular side of the membrane. A disulfide bridge connects residues C101 and C179. Residues 103–124 (VYGLIGGIFGLTSIMTMTMISI) form a helical membrane-spanning segment. A 'Ionic lock' involved in activated form stabilization motif is present at residues 125–127 (DRY). At 125–144 (DRYNVIRRPMSASKKMSHRK) the chain is on the cytoplasmic side. A helical transmembrane segment spans residues 145–165 (AFIMIVFVWIWSTIWAIGPIF). Residues 166-192 (GWGAYQLEGVLCNCSFDYITRDASTRS) are Extracellular-facing. The helical transmembrane segment at 193–217 (NIVCMYIFAFMFPIVVIFFCYFNIV) threads the bilayer. Residues 218–254 (MSVSNHEKEMAAMAKRLNAKELRKAQAGASAEMKLAK) lie on the Cytoplasmic side of the membrane. Residues 255–276 (ISIVIVTQSLLSWSPYAIVALL) form a helical membrane-spanning segment. The Extracellular portion of the chain corresponds to 277–286 (AQFGPIEWVT). Residues 287-308 (PYAAQLPVMFAKASAIHNPMIY) form a helical membrane-spanning segment. An N6-(retinylidene)lysine modification is found at K298. Residues 309-439 (SVSHPKFREA…PQAAPPQGVD (131 aa)) are Cytoplasmic-facing. S-palmitoyl cysteine attachment occurs at residues C329 and C330. Residues 369 to 381 (MMQKMQAQQQQQP) are compositionally biased toward low complexity. The tract at residues 369 to 439 (MMQKMQAQQQ…PQAAPPQGVD (71 aa)) is disordered. The span at 382–433 (AYPPQGYPPQGYPPPPPQGYPPQGYPPQGYPPQGYPPPPQGPPPQGPPPQAA) shows a compositional bias: pro residues.

This sequence belongs to the G-protein coupled receptor 1 family. Opsin subfamily. In terms of processing, contains one covalently linked retinal chromophore. Upon light absorption, the covalently bound 11-cis-retinal is converted to all-trans-retinal. After hydrolysis of the Schiff base and release of the covalently bound all-trans-retinal, active rhodopsin is regenerated by binding of a fresh molecule of 11-cis-retinal.

It localises to the cell projection. The protein localises to the rhabdomere membrane. Photoreceptor required for image-forming vision at low light intensity. Light-induced isomerization of 11-cis to all-trans retinal triggers a conformational change that activates signaling via G-proteins. Signaling mediates the activation of phospholipase C. Subsequent receptor phosphorylation mediates displacement of the bound G-protein alpha subunit by arrestin and terminates signaling. This chain is Rhodopsin (RHO), found in Alloteuthis subulata (Squid).